Reading from the N-terminus, the 139-residue chain is MLIAIGIMFQPLQYPTIPCIIFMVIVGLGLLFAFQFILGYGFEMHRQITIKDRIAFRNYVVGKIFNVLVEHSYYGLLLSTFNLFVYKKAITIRLCFIFAISIVIFWILGGKLIKKSLKLCFSWFYFFINPSISHKCNSK.

The next 3 helical transmembrane spans lie at 19 to 39 (CIIF…FILG), 64 to 84 (IFNV…FNLF), and 89 to 109 (AITI…WILG).

It localises to the cell membrane. This is an uncharacterized protein from Methanocaldococcus jannaschii (strain ATCC 43067 / DSM 2661 / JAL-1 / JCM 10045 / NBRC 100440) (Methanococcus jannaschii).